A 134-amino-acid chain; its full sequence is Transcription antitermination protein NusB (134 aa).

This sequence belongs to the NusB family.

In terms of biological role, involved in transcription antitermination. Required for transcription of ribosomal RNA (rRNA) genes. Binds specifically to the boxA antiterminator sequence of the ribosomal RNA (rrn) operons. This is Transcription antitermination protein NusB from Syntrophomonas wolfei subsp. wolfei (strain DSM 2245B / Goettingen).